We begin with the raw amino-acid sequence, 316 residues long: 4-hydroxy-3-methylbut-2-enyl diphosphate reductase (316 aa).

Cys12 contributes to the [4Fe-4S] cluster binding site. (2E)-4-hydroxy-3-methylbut-2-enyl diphosphate contacts are provided by His41 and His74. 2 residues coordinate dimethylallyl diphosphate: His41 and His74. Residues His41 and His74 each coordinate isopentenyl diphosphate. [4Fe-4S] cluster is bound at residue Cys96. His124 serves as a coordination point for (2E)-4-hydroxy-3-methylbut-2-enyl diphosphate. His124 contributes to the dimethylallyl diphosphate binding site. His124 is a binding site for isopentenyl diphosphate. The active-site Proton donor is the Glu126. Residue Thr167 participates in (2E)-4-hydroxy-3-methylbut-2-enyl diphosphate binding. Residue Cys197 participates in [4Fe-4S] cluster binding. Ser225, Ser226, Asn227, and Ser269 together coordinate (2E)-4-hydroxy-3-methylbut-2-enyl diphosphate. Residues Ser225, Ser226, Asn227, and Ser269 each coordinate dimethylallyl diphosphate. Isopentenyl diphosphate-binding residues include Ser225, Ser226, Asn227, and Ser269.

Belongs to the IspH family. As to quaternary structure, homodimer. It depends on [4Fe-4S] cluster as a cofactor.

It carries out the reaction isopentenyl diphosphate + 2 oxidized [2Fe-2S]-[ferredoxin] + H2O = (2E)-4-hydroxy-3-methylbut-2-enyl diphosphate + 2 reduced [2Fe-2S]-[ferredoxin] + 2 H(+). It catalyses the reaction dimethylallyl diphosphate + 2 oxidized [2Fe-2S]-[ferredoxin] + H2O = (2E)-4-hydroxy-3-methylbut-2-enyl diphosphate + 2 reduced [2Fe-2S]-[ferredoxin] + 2 H(+). Its pathway is isoprenoid biosynthesis; dimethylallyl diphosphate biosynthesis; dimethylallyl diphosphate from (2E)-4-hydroxy-3-methylbutenyl diphosphate: step 1/1. It functions in the pathway isoprenoid biosynthesis; isopentenyl diphosphate biosynthesis via DXP pathway; isopentenyl diphosphate from 1-deoxy-D-xylulose 5-phosphate: step 6/6. Its function is as follows. Catalyzes the conversion of 1-hydroxy-2-methyl-2-(E)-butenyl 4-diphosphate (HMBPP) into a mixture of isopentenyl diphosphate (IPP) and dimethylallyl diphosphate (DMAPP). Acts in the terminal step of the DOXP/MEP pathway for isoprenoid precursor biosynthesis. The chain is 4-hydroxy-3-methylbut-2-enyl diphosphate reductase from Shigella flexneri serotype 5b (strain 8401).